Here is a 495-residue protein sequence, read N- to C-terminus: Protein-serine O-palmitoleoyltransferase porcupine (495 aa).

8 helical membrane-spanning segments follow: residues 46-66 (TQYI…VLIV), 92-112 (VIDH…AVQW), 184-204 (TVLS…GPWI), 232-252 (MLIH…FLLT), 358-378 (PFGT…LHGL), 403-422 (LATI…SCTV), 434-454 (VINM…GCIF), and 475-495 (TELN…YFVI). Histidine 376 is an active-site residue.

This sequence belongs to the membrane-bound acyltransferase family. Porcupine subfamily.

The protein localises to the endoplasmic reticulum membrane. It carries out the reaction [Wnt protein]-L-serine + (9Z)-hexadecenoyl-CoA = [Wnt protein]-O-(9Z)-hexadecenoyl-L-serine + CoA. In terms of biological role, protein-serine O-palmitoleoyltransferase that acts as a key regulator of the Wnt signaling pathway by mediating the attachment of palmitoleate, a 16-carbon monounsaturated fatty acid (C16:1(9Z)), to Wnt proteins. Serine palmitoleoylation of WNT proteins is required for efficient binding to frizzled receptors. The chain is Protein-serine O-palmitoleoyltransferase porcupine from Anopheles gambiae (African malaria mosquito).